The chain runs to 260 residues: MKKGKKLYEGKAKIIYATSDKNLVIQYFKDDATAFNNLKKSTIEGKGVLNNRISEHILSNLTQIGIKNHLVKRLNMREQIIKLVEIIPIEFIVRNVATGSITKRLGIEDGTVLKQPLLEYCLKDDKLGDPLIAEEHILAFDWATKSELEKVKKMILRINDFMIGMFRGVGIKLIDFKLEFGRLKENGKNEVILADEISPDTCRLWDSITDKKLDKDRFRKDLGDLIPAYTEVAKRLGILHEQSNLSAVNVTKLRSVKKRK.

The protein belongs to the SAICAR synthetase family.

The enzyme catalyses 5-amino-1-(5-phospho-D-ribosyl)imidazole-4-carboxylate + L-aspartate + ATP = (2S)-2-[5-amino-1-(5-phospho-beta-D-ribosyl)imidazole-4-carboxamido]succinate + ADP + phosphate + 2 H(+). It participates in purine metabolism; IMP biosynthesis via de novo pathway; 5-amino-1-(5-phospho-D-ribosyl)imidazole-4-carboxamide from 5-amino-1-(5-phospho-D-ribosyl)imidazole-4-carboxylate: step 1/2. This is Phosphoribosylaminoimidazole-succinocarboxamide synthase from Pelagibacter ubique (strain HTCC1062).